The primary structure comprises 104 residues: Large ribosomal subunit protein uL24 (104 aa).

The protein belongs to the universal ribosomal protein uL24 family. In terms of assembly, part of the 50S ribosomal subunit.

One of two assembly initiator proteins, it binds directly to the 5'-end of the 23S rRNA, where it nucleates assembly of the 50S subunit. Functionally, one of the proteins that surrounds the polypeptide exit tunnel on the outside of the subunit. The sequence is that of Large ribosomal subunit protein uL24 from Maricaulis maris (strain MCS10) (Caulobacter maris).